A 61-amino-acid chain; its full sequence is Large ribosomal subunit protein uL30 (61 aa).

This sequence belongs to the universal ribosomal protein uL30 family. As to quaternary structure, part of the 50S ribosomal subunit.

In Laribacter hongkongensis (strain HLHK9), this protein is Large ribosomal subunit protein uL30.